The chain runs to 209 residues: Uracil phosphoribosyltransferase (209 aa).

5-phospho-alpha-D-ribose 1-diphosphate-binding positions include Arg79, Arg104, and 131 to 139 (DPMLATGGS). Residues Ile194 and 199–201 (GDA) each bind uracil. Asp200 provides a ligand contact to 5-phospho-alpha-D-ribose 1-diphosphate.

This sequence belongs to the UPRTase family. It depends on Mg(2+) as a cofactor.

The catalysed reaction is UMP + diphosphate = 5-phospho-alpha-D-ribose 1-diphosphate + uracil. It participates in pyrimidine metabolism; UMP biosynthesis via salvage pathway; UMP from uracil: step 1/1. With respect to regulation, allosterically activated by GTP. In terms of biological role, catalyzes the conversion of uracil and 5-phospho-alpha-D-ribose 1-diphosphate (PRPP) to UMP and diphosphate. In Pediococcus pentosaceus (strain ATCC 25745 / CCUG 21536 / LMG 10740 / 183-1w), this protein is Uracil phosphoribosyltransferase.